We begin with the raw amino-acid sequence, 158 residues long: 2-C-methyl-D-erythritol 2,4-cyclodiphosphate synthase (158 aa).

A divalent metal cation contacts are provided by D8 and H10. 4-CDP-2-C-methyl-D-erythritol 2-phosphate-binding positions include 8–10 and 34–35; these read DVH and HS. H42 provides a ligand contact to a divalent metal cation. 4-CDP-2-C-methyl-D-erythritol 2-phosphate contacts are provided by residues 56-58, 61-65, 100-106, 132-135, F139, and R142; these read DIG, FPDTD, AQAPKMA, and TTSE.

It belongs to the IspF family. As to quaternary structure, homotrimer. A divalent metal cation is required as a cofactor.

It carries out the reaction 4-CDP-2-C-methyl-D-erythritol 2-phosphate = 2-C-methyl-D-erythritol 2,4-cyclic diphosphate + CMP. Its pathway is isoprenoid biosynthesis; isopentenyl diphosphate biosynthesis via DXP pathway; isopentenyl diphosphate from 1-deoxy-D-xylulose 5-phosphate: step 4/6. Its function is as follows. Involved in the biosynthesis of isopentenyl diphosphate (IPP) and dimethylallyl diphosphate (DMAPP), two major building blocks of isoprenoid compounds. Catalyzes the conversion of 4-diphosphocytidyl-2-C-methyl-D-erythritol 2-phosphate (CDP-ME2P) to 2-C-methyl-D-erythritol 2,4-cyclodiphosphate (ME-CPP) with a corresponding release of cytidine 5-monophosphate (CMP). The sequence is that of 2-C-methyl-D-erythritol 2,4-cyclodiphosphate synthase from Aliivibrio fischeri (strain ATCC 700601 / ES114) (Vibrio fischeri).